Here is a 440-residue protein sequence, read N- to C-terminus: C-terminal-binding protein 1 (440 aa).

Residues serine 100, 180–185 (IGLGRV), aspartate 204, 237–243 (CGLNEHN), 264–266 (TAR), and aspartate 290 each bind NAD(+). Arginine 266 is a catalytic residue. Glutamate 295 is an active-site residue. The Proton donor role is filled by histidine 315. Residue 315-318 (HAAW) coordinates NAD(+). The tract at residues 409 to 440 (HAHPAVAHPPHAPSPGQTIKPEADRDHPSDQL) is disordered. Over residues 429–440 (PEADRDHPSDQL) the composition is skewed to basic and acidic residues.

Belongs to the D-isomer specific 2-hydroxyacid dehydrogenase family. NAD(+) serves as cofactor.

Its subcellular location is the nucleus. Corepressor targeting diverse transcription regulators. Has dehydrogenase activity. This is C-terminal-binding protein 1 (ctbp1) from Xenopus laevis (African clawed frog).